The primary structure comprises 688 residues: Glycine--tRNA ligase beta subunit (688 aa).

The protein belongs to the class-II aminoacyl-tRNA synthetase family. Tetramer of two alpha and two beta subunits.

It is found in the cytoplasm. The catalysed reaction is tRNA(Gly) + glycine + ATP = glycyl-tRNA(Gly) + AMP + diphosphate. This Vibrio atlanticus (strain LGP32) (Vibrio splendidus (strain Mel32)) protein is Glycine--tRNA ligase beta subunit.